The sequence spans 565 residues: Proline--tRNA ligase (565 aa).

It belongs to the class-II aminoacyl-tRNA synthetase family. ProS type 1 subfamily. Homodimer.

It is found in the cytoplasm. It carries out the reaction tRNA(Pro) + L-proline + ATP = L-prolyl-tRNA(Pro) + AMP + diphosphate. Catalyzes the attachment of proline to tRNA(Pro) in a two-step reaction: proline is first activated by ATP to form Pro-AMP and then transferred to the acceptor end of tRNA(Pro). As ProRS can inadvertently accommodate and process non-cognate amino acids such as alanine and cysteine, to avoid such errors it has two additional distinct editing activities against alanine. One activity is designated as 'pretransfer' editing and involves the tRNA(Pro)-independent hydrolysis of activated Ala-AMP. The other activity is designated 'posttransfer' editing and involves deacylation of mischarged Ala-tRNA(Pro). The misacylated Cys-tRNA(Pro) is not edited by ProRS. This Lactobacillus helveticus (strain DPC 4571) protein is Proline--tRNA ligase.